A 1088-amino-acid chain; its full sequence is Probable cellulose synthase A catalytic subunit 9 [UDP-forming] (1088 aa).

N-acetylmethionine is present on M1. The Cytoplasmic segment spans residues 1–283; the sequence is MNTGGRLIAG…RSSRINPYRM (283 aa). 8 residues coordinate Zn(2+): C39, C42, C58, C61, C66, C69, C81, and C84. An RING-type; degenerate zinc finger spans residues 39-85; that stretch reads CKICRDEIELTDNGEPFIACNECAFPTCRPCYEYERREGNQACPQCG. Residues 284–304 form a helical membrane-spanning segment; it reads LIFCRLAILGLFFHYRILHPV. Topologically, residues 305–306 are extracellular; sequence ND. The helical transmembrane segment at 307–327 threads the bilayer; the sequence is AFGLWLTSVICEIWFAVSWIL. At 328-871 the chain is on the cytoplasmic side; that stretch reads DQFPKWYPIE…INSVVYPWTS (544 aa). Residues S366, K372, E373, D402, and K543 each contribute to the UDP-alpha-D-glucose site. Residue D402 is part of the active site. Mn(2+)-binding residues include K544 and D568. The active site involves D788. The chain crosses the membrane as a helical span at residues 872–892; sequence LPLLVYCSLPAICLLTGKFIV. The Extracellular portion of the chain corresponds to 893–897; it reads PEISN. The helical transmembrane segment at 898–918 threads the bilayer; sequence YAGILFLLMFMSIAVTGILEM. Residues 919–933 lie on the Cytoplasmic side of the membrane; that stretch reads QWGKIGIDDWWRNEQ. The chain crosses the membrane as a helical span at residues 934–954; sequence FWVIGGVSSHLFALFQGLLKV. The Extracellular portion of the chain corresponds to 955–983; that stretch reads LAGVSTNFTVTSKAADDGEFSELYIFKWT. N-linked (GlcNAc...) asparagine glycosylation occurs at N961. A helical membrane pass occupies residues 984 to 1004; that stretch reads SLLIPPTTLLIINIVGVIVGV. Residues 1005–1015 are Cytoplasmic-facing; that stretch reads SDAINNGYDSW. A helical transmembrane segment spans residues 1016–1036; that stretch reads GPLFGRLFFALWVIVHLYPFL. The Extracellular segment spans residues 1037–1045; the sequence is KGLLGKQDR. The helical transmembrane segment at 1046 to 1066 threads the bilayer; it reads VPTIILVWSILLASILTLLWV. Topologically, residues 1067–1088 are cytoplasmic; it reads RVNPFVSKDGPVLEICGLDCLK.

Belongs to the glycosyltransferase 2 family. Plant cellulose synthase subfamily. It depends on Mn(2+) as a cofactor. Zn(2+) serves as cofactor. In terms of tissue distribution, expressed in young plants, stems and flowers.

It localises to the cell membrane. It carries out the reaction [(1-&gt;4)-beta-D-glucosyl](n) + UDP-alpha-D-glucose = [(1-&gt;4)-beta-D-glucosyl](n+1) + UDP + H(+). It functions in the pathway glycan metabolism; plant cellulose biosynthesis. Functionally, probable catalytic subunit of cellulose synthase terminal complexes ('rosettes'), required for beta-1,4-glucan microfibril crystallization, a major mechanism of the cell wall formation. This Arabidopsis thaliana (Mouse-ear cress) protein is Probable cellulose synthase A catalytic subunit 9 [UDP-forming].